The sequence spans 398 residues: DNA-directed RNA polymerase III subunit RPC4 (398 aa).

The segment at 1 to 114 (MSEGNAAGEP…SHSIFEQGPA (114 aa)) is disordered. At serine 2 the chain carries N-acetylserine. Serine 42 is subject to Phosphoserine. Basic and acidic residues predominate over residues 66-100 (KIKEEPKEEVTVKKEKRERDRDRQREGHGRGRGRP). Residues lysine 68 and lysine 78 each participate in a glycyl lysine isopeptide (Lys-Gly) (interchain with G-Cter in SUMO2) cross-link. Omega-N-methylarginine occurs at positions 95, 97, and 99. Glycyl lysine isopeptide (Lys-Gly) (interchain with G-Cter in SUMO2) cross-links involve residues lysine 141, lysine 152, lysine 160, lysine 190, lysine 199, lysine 206, lysine 220, lysine 285, lysine 302, lysine 310, and lysine 396. The segment at 220 to 244 (KEEPRDEEEEAKMKAPPKAARKTPG) is disordered.

The protein belongs to the eukaryotic RPC4/POLR3D RNA polymerase subunit family. Component of the RNA polymerase III complex consisting of 17 subunits: a ten-subunit horseshoe-shaped catalytic core composed of POLR3A/RPC1, POLR3B/RPC2, POLR1C/RPAC1, POLR1D/RPAC2, POLR3K/RPC10, POLR2E/RPABC1, POLR2F/RPABC2, POLR2H/RPABC3, POLR2K/RPABC4 and POLR2L/RPABC5; a mobile stalk composed of two subunits POLR3H/RPC8 and CRCP/RPC9, protruding from the core and functioning primarily in transcription initiation; and additional subunits homologous to general transcription factors of the RNA polymerase II machinery, POLR3C/RPC3-POLR3F/RPC6-POLR3G/RPC7 heterotrimer required for transcription initiation and POLR3D/RPC4-POLR3E/RPC5 heterodimer involved in both transcription initiation and termination. In terms of processing, sumoylation on Lys-141 can serve as a signal to mark misfolded Pol III for proteasomal degradation.

It is found in the nucleus. DNA-dependent RNA polymerase catalyzes the transcription of DNA into RNA using the four ribonucleoside triphosphates as substrates. Specific peripheric component of RNA polymerase III (Pol III) which synthesizes small non-coding RNAs including 5S rRNA, snRNAs, tRNAs and miRNAs from at least 500 distinct genomic loci. Assembles with POLR3E/RPC5 forming a subcomplex that binds the Pol III core. Enables recruitment of Pol III at transcription initiation site and drives transcription initiation from both type 2 and type 3 DNA promoters. Required for efficient transcription termination and reinitiation. Pol III plays a key role in sensing and limiting infection by intracellular bacteria and DNA viruses. Acts as nuclear and cytosolic DNA sensor involved in innate immune response. Can sense non-self dsDNA that serves as template for transcription into dsRNA. The non-self RNA polymerase III transcripts, such as Epstein-Barr virus-encoded RNAs (EBERs) induce type I interferon and NF-kappa-B through the RIG-I pathway. In Homo sapiens (Human), this protein is DNA-directed RNA polymerase III subunit RPC4.